The primary structure comprises 100 residues: uncharacterized protein (100 aa).

The N-terminal stretch at methionine 1–alanine 23 is a signal peptide.

As to expression, nacreous layer of shell (at protein level). Expressed primarily in the mantle with highest level in the mantle pallium and lower level in the mantle edge.

The protein resides in the secreted. This is an uncharacterized protein from Margaritifera margaritifera (Freshwater pearl mussel).